Here is a 469-residue protein sequence, read N- to C-terminus: Probable indole-3-acetic acid-amido synthetase GH3.13 (469 aa).

Positions 1-26 (MTSTSSENAPDHDHDHDASSPAPATA) are disordered. Residues 9–18 (APDHDHDHDA) show a composition bias toward basic and acidic residues.

The protein belongs to the IAA-amido conjugating enzyme family.

Functionally, may catalyze the synthesis of indole-3-acetic acid (IAA)-amino acid conjugates, providing a mechanism for the plant to cope with the presence of excess auxin. This chain is Probable indole-3-acetic acid-amido synthetase GH3.13 (GH3.13), found in Oryza sativa subsp. japonica (Rice).